Reading from the N-terminus, the 732-residue chain is Catalase-peroxidase (732 aa).

A disordered region spans residues 1 to 29 (MTTESKCPFSGGGKPNTPRRGPSNQDWWP). A cross-link (tryptophyl-tyrosyl-methioninium (Trp-Tyr) (with M-249)) is located at residues 96 to 223 (WHSAGTYRIG…LAAVQMGLIY (128 aa)). The active-site Proton acceptor is the His97. Positions 223-249 (YVNPEGPDGNPDPVAAARDIRETFARM) form a cross-link, tryptophyl-tyrosyl-methioninium (Tyr-Met) (with W-96). His264 is a heme b binding site.

Belongs to the peroxidase family. Peroxidase/catalase subfamily. Homodimer or homotetramer. It depends on heme b as a cofactor. In terms of processing, formation of the three residue Trp-Tyr-Met cross-link is important for the catalase, but not the peroxidase activity of the enzyme.

The catalysed reaction is H2O2 + AH2 = A + 2 H2O. The enzyme catalyses 2 H2O2 = O2 + 2 H2O. In terms of biological role, bifunctional enzyme with both catalase and broad-spectrum peroxidase activity. This chain is Catalase-peroxidase, found in Serratia proteamaculans (strain 568).